The chain runs to 329 residues: D-alanine--D-alanine ligase (329 aa).

Residues 120–326 (KLWYDAIGIP…FHEFLADCIN (207 aa)) enclose the ATP-grasp domain. Position 150–205 (150–205 (AFDKWGKVFVKAARQGSSVGCYSVTNKQSVSQAVNDAFGYSEQVLVEKSVKPRELE)) interacts with ATP. Mg(2+)-binding residues include D280, E293, and N295.

It belongs to the D-alanine--D-alanine ligase family. It depends on Mg(2+) as a cofactor. Mn(2+) is required as a cofactor.

It is found in the cytoplasm. It carries out the reaction 2 D-alanine + ATP = D-alanyl-D-alanine + ADP + phosphate + H(+). The protein operates within cell wall biogenesis; peptidoglycan biosynthesis. In terms of biological role, cell wall formation. The protein is D-alanine--D-alanine ligase of Vibrio campbellii (strain ATCC BAA-1116).